The primary structure comprises 259 residues: Secretion system apparatus protein SsaT (259 aa).

6 consecutive transmembrane segments (helical) span residues 9 to 29 (LIALAVAFIRPLSLSLLLPLL), 35 to 55 (GAALLRNGVLMSLTFPILPII), 78 to 98 (VIIGFSIGFCAAVPFWAVDMA), 127 to 147 (LLFSQFLCVIFFISGGMEFIL), 185 to 205 (ISFSLPAIICMVLADLALGLL), and 214 to 234 (VFFFSMPLKSILVLLTLLISF).

This sequence belongs to the FliR/MopE/SpaR family.

Its subcellular location is the cell membrane. Functionally, part of a type III secretion system. In Salmonella typhimurium (strain LT2 / SGSC1412 / ATCC 700720), this protein is Secretion system apparatus protein SsaT (ssaT).